A 1043-amino-acid chain; its full sequence is Unconventional myosin-Ia (1043 aa).

The 687-residue stretch at 8–694 (VGVEDLVLLE…TLFYLEEQRR (687 aa)) folds into the Myosin motor domain. ATP is bound at residue 101–108 (GESGSGKT). The segment at 571 to 593 (VAILMKNLYSKSPNYIRCIKPNE) is actin-binding. IQ domains follow at residues 697 to 719 (LQQL…HYQL), 720 to 742 (MRKS…CYGK), and 743 to 772 (IKAS…SEAA). A TH1 domain is found at 858-1042 (KASYPQSVPI…KGSHCLEVTV (185 aa)).

This sequence belongs to the TRAFAC class myosin-kinesin ATPase superfamily. Myosin family. Post-translationally, phosphorylated by ALPK1.

Functionally, involved in directing the movement of organelles along actin filaments. This is Unconventional myosin-Ia (MYO1A) from Homo sapiens (Human).